Consider the following 274-residue polypeptide: Diaminopimelate epimerase (274 aa).

Asn11, Gln44, and Asn64 together coordinate substrate. Catalysis depends on Cys73, which acts as the Proton donor. Substrate-binding positions include 74 to 75, Asn157, Asn190, and 208 to 209; these read GN and ER. Residue Cys217 is the Proton acceptor of the active site. 218 to 219 serves as a coordination point for substrate; the sequence is GS.

This sequence belongs to the diaminopimelate epimerase family. Homodimer.

Its subcellular location is the cytoplasm. It carries out the reaction (2S,6S)-2,6-diaminopimelate = meso-2,6-diaminopimelate. The protein operates within amino-acid biosynthesis; L-lysine biosynthesis via DAP pathway; DL-2,6-diaminopimelate from LL-2,6-diaminopimelate: step 1/1. Functionally, catalyzes the stereoinversion of LL-2,6-diaminopimelate (L,L-DAP) to meso-diaminopimelate (meso-DAP), a precursor of L-lysine and an essential component of the bacterial peptidoglycan. The polypeptide is Diaminopimelate epimerase (Histophilus somni (strain 2336) (Haemophilus somnus)).